A 49-amino-acid chain; its full sequence is Large ribosomal subunit protein bL33A (49 aa).

The protein belongs to the bacterial ribosomal protein bL33 family.

The sequence is that of Large ribosomal subunit protein bL33A from Levilactobacillus brevis (strain ATCC 367 / BCRC 12310 / CIP 105137 / JCM 1170 / LMG 11437 / NCIMB 947 / NCTC 947) (Lactobacillus brevis).